Consider the following 384-residue polypeptide: 4-hydroxy-3-methylbut-2-en-1-yl diphosphate synthase (flavodoxin) (384 aa).

The [4Fe-4S] cluster site is built by C272, C275, C307, and E314.

The protein belongs to the IspG family. It depends on [4Fe-4S] cluster as a cofactor.

The enzyme catalyses (2E)-4-hydroxy-3-methylbut-2-enyl diphosphate + oxidized [flavodoxin] + H2O + 2 H(+) = 2-C-methyl-D-erythritol 2,4-cyclic diphosphate + reduced [flavodoxin]. It functions in the pathway isoprenoid biosynthesis; isopentenyl diphosphate biosynthesis via DXP pathway; isopentenyl diphosphate from 1-deoxy-D-xylulose 5-phosphate: step 5/6. Functionally, converts 2C-methyl-D-erythritol 2,4-cyclodiphosphate (ME-2,4cPP) into 1-hydroxy-2-methyl-2-(E)-butenyl 4-diphosphate. This Rhodospirillum rubrum (strain ATCC 11170 / ATH 1.1.1 / DSM 467 / LMG 4362 / NCIMB 8255 / S1) protein is 4-hydroxy-3-methylbut-2-en-1-yl diphosphate synthase (flavodoxin).